The chain runs to 283 residues: MIKKSKTAEVIISALPYIRKFRDKIFVIKYGGAAQTDDNLKLNFARDIVLLHMVGIKIIIIHGGGKKINQTLDLLGVKSEFADGLRITDKKSIEIVEMVLSGAVNKQITALLNQNGAKAIGICGKDANLLEAEVLSGGKYGFVGEIKNVNVNFLKDLLTNDYIPVIAPIAANEKNETFNINADLCASKIASALKADKIVFLSDIDGVLDKNGELISKLNPNLIENLKKDGTISGGMIPKIDACVECIENGVKNAHIINGKIPHSILLELFTDNGIGSMVKEVF.

Residues 64–65 (GG), R86, and N179 each bind substrate.

Belongs to the acetylglutamate kinase family. ArgB subfamily.

It localises to the cytoplasm. It carries out the reaction N-acetyl-L-glutamate + ATP = N-acetyl-L-glutamyl 5-phosphate + ADP. It participates in amino-acid biosynthesis; L-arginine biosynthesis; N(2)-acetyl-L-ornithine from L-glutamate: step 2/4. Functionally, catalyzes the ATP-dependent phosphorylation of N-acetyl-L-glutamate. This chain is Acetylglutamate kinase, found in Campylobacter hominis (strain ATCC BAA-381 / DSM 21671 / CCUG 45161 / LMG 19568 / NCTC 13146 / CH001A).